We begin with the raw amino-acid sequence, 70 residues long: Large ribosomal subunit protein bL31 (70 aa).

4 residues coordinate Zn(2+): Cys16, Cys18, Cys37, and Cys40.

The protein belongs to the bacterial ribosomal protein bL31 family. Type A subfamily. As to quaternary structure, part of the 50S ribosomal subunit. Requires Zn(2+) as cofactor.

Functionally, binds the 23S rRNA. The chain is Large ribosomal subunit protein bL31 from Ectopseudomonas mendocina (strain ymp) (Pseudomonas mendocina).